We begin with the raw amino-acid sequence, 483 residues long: Argininosuccinate lyase (483 aa).

Belongs to the lyase 1 family. Argininosuccinate lyase subfamily.

It localises to the cytoplasm. The catalysed reaction is 2-(N(omega)-L-arginino)succinate = fumarate + L-arginine. It participates in amino-acid biosynthesis; L-arginine biosynthesis; L-arginine from L-ornithine and carbamoyl phosphate: step 3/3. The protein is Argininosuccinate lyase of Archaeoglobus fulgidus (strain ATCC 49558 / DSM 4304 / JCM 9628 / NBRC 100126 / VC-16).